Here is a 101-residue protein sequence, read N- to C-terminus: Small ribosomal subunit protein uS14 (101 aa).

Belongs to the universal ribosomal protein uS14 family. As to quaternary structure, part of the 30S ribosomal subunit. Contacts proteins S3 and S10.

Its function is as follows. Binds 16S rRNA, required for the assembly of 30S particles and may also be responsible for determining the conformation of the 16S rRNA at the A site. This chain is Small ribosomal subunit protein uS14, found in Histophilus somni (strain 2336) (Haemophilus somnus).